A 225-amino-acid polypeptide reads, in one-letter code: Glutathione S-transferase Mu 5 (225 aa).

Positions lysine 5–glycine 92 constitute a GST N-terminal domain. Serine 6 bears the Phosphoserine mark. Residues tyrosine 11 to tryptophan 12, tryptophan 50 to lysine 54, asparagine 63 to leucine 64, and glutamine 76 to serine 77 each bind glutathione. The GST C-terminal domain occupies threonine 94–isoleucine 212. Tyrosine 120 lines the substrate pocket.

Belongs to the GST superfamily. Mu family. As to quaternary structure, homodimer. Post-translationally, the N-terminus is blocked. Expressed in testis and brain. Very low expression in liver, kidney, heart and lung.

The protein localises to the cytoplasm. It catalyses the reaction RX + glutathione = an S-substituted glutathione + a halide anion + H(+). Its function is as follows. Conjugation of reduced glutathione to a wide number of exogenous and endogenous hydrophobic electrophiles. This is Glutathione S-transferase Mu 5 (Gstm5) from Rattus norvegicus (Rat).